A 189-amino-acid polypeptide reads, in one-letter code: Hypoxanthine/guanine phosphoribosyltransferase (189 aa).

This sequence belongs to the purine/pyrimidine phosphoribosyltransferase family. Archaeal HPRT subfamily. As to quaternary structure, homodimer.

The protein localises to the cytoplasm. It catalyses the reaction IMP + diphosphate = hypoxanthine + 5-phospho-alpha-D-ribose 1-diphosphate. It carries out the reaction GMP + diphosphate = guanine + 5-phospho-alpha-D-ribose 1-diphosphate. It participates in purine metabolism; IMP biosynthesis via salvage pathway; IMP from hypoxanthine: step 1/1. Catalyzes a salvage reaction resulting in the formation of IMP that is energically less costly than de novo synthesis. This is Hypoxanthine/guanine phosphoribosyltransferase (hpt) from Methanosarcina acetivorans (strain ATCC 35395 / DSM 2834 / JCM 12185 / C2A).